The following is an 821-amino-acid chain: High affinity potassium transporter (821 aa).

Polar residues predominate over residues 1-10 (MSDSQSNKQN). The segment at 1–47 (MSDSQSNKQNQGEDDNNVSSSIESNENYPFRLNDEESEPQSSTTESM) is disordered. Over 1-57 (MSDSQSNKQNQGEDDNNVSSSIESNENYPFRLNDEESEPQSSTTESMLKAKKQSWRQ) the chain is Cytoplasmic. Over residues 17–27 (NVSSSIESNEN) the composition is skewed to low complexity. A helical membrane pass occupies residues 58 to 78 (VLMLGFSSLGAIYGDIGTSPL). The Extracellular portion of the chain corresponds to 79 to 101 (YVLNSIKYPNSSPTEEDIYGAIS). Residues 102 to 122 (IIFYLFTFIVIFKYILIVLFL) traverse the membrane as a helical segment. Residues 123-190 (GTNDGEGGQV…KASGFKTNPK (68 aa)) are Cytoplasmic-facing. The helical transmembrane segment at 191 to 211 (LIKFISKFILFGCFFGCSLVM) threads the bilayer. At 212-238 (SDGLLTPTTSVLSAIAGIQIANPSFND) the chain is on the extracellular side. A helical transmembrane segment spans residues 239–259 (VLAVSEVVLIVLFLIQQFGSN). Position 260 (Lys-260) is a topological domain, cytoplasmic. The helical transmembrane segment at 261 to 281 (ISFTFAPIIFLWLIGLIISGI) threads the bilayer. Over 282–306 (YNIVKFHPAVFKSLSPYYAIQLLKH) the chain is Extracellular. Residues 307-327 (SGIDVFSGAMLSITGTEAMFA) traverse the membrane as a helical segment. At 328–340 (DVGHFGRLPIQLT) the chain is on the cytoplasmic side. The helical transmembrane segment at 341–361 (LTLFVYPALIICYLGQGAYII) threads the bilayer. Residues 362–386 (KHPEALSNPFFYSIPGGLNSWIYWV) lie on the Extracellular side of the membrane. A helical membrane pass occupies residues 387–407 (MFVLATLSTIIASQALILGVF). Topologically, residues 408–434 (SITSQLINLDCFPNFKIIHVSKKYAGK) are cytoplasmic. The chain crosses the membrane as a helical span at residues 435-455 (VYIPAINWLLMIGVCATTAGF). The Extracellular segment spans residues 456–463 (KNSNNVTA). Residue Asn-460 is glycosylated (N-linked (GlcNAc...) asparagine). Residues 464–484 (AYGLGITLDFLVTSSLIMVCM) traverse the membrane as a helical segment. Over 485–491 (TYVYNWN) the chain is Cytoplasmic. The chain crosses the membrane as a helical span at residues 492–512 (ILIPITYALIFLPLEVIMVIS). The Extracellular segment spans residues 513–516 (NLKK). The helical transmembrane segment at 517 to 537 (ITHGAWFPLMMSGIFMMFLSF) threads the bilayer. The Cytoplasmic portion of the chain corresponds to 538–821 (WRWARSRKVN…KMFLGGVVRI (284 aa)).

This sequence belongs to the HAK/KUP transporter (TC 2.A.72) family.

The protein resides in the membrane. Major high-affinity potassium uptake protein. This Schwanniomyces occidentalis (Yeast) protein is High affinity potassium transporter (HAK1).